A 633-amino-acid polypeptide reads, in one-letter code: MDLLSIQDPSFLKKMSIEQLEELSEEIRNFLITSLSASGGHIGPNLGVVELTIALHKEFDSPKDKFLWDVGHQSYVHKLLTGRGKEFETLRQYKGLCGFPKRSESEHDVWETGHSSTSLSGAMGMAAARDIKGSKEYIIPIIGDGALTGGMALEALNHIGDEKKDMIVILNDNEMSIAPNVGAIHSMLGRLRTAGKYQWVKDELEYLFKRIPAVGGKLAATAERIKDSLKYMLVSGMFFEELGFTYLGPVDGHSYHELFENLQYAKKTKGPVLLHVITKKGKGYKPAETDTIGTWHGTGPYKINTGDFVKPKAAAPSWSGLVSGTVQELAREDDRIVAITPAMPVGSKLEGFAKEFPERMFDVGIAEQHAATMAAGMALQGMKPFLAIYSTFLQRAYDQVVHDICRQNANVFIGIDRAGLVGADGETHQGVFDIAFLRHIPNLVLMMPKDENEGRHMVNTALNYEEGPIAMRFPRGNGLGVKMDKELKTIPIGTWEVLRPGKDAVILTFGTTIEMALEAAEELQKEGLSVRVVNARFIKPIDKQMMKAILNEGLPILTIEEAVLEGGFGSTILEYAHDLGMYHTPIDRMGIPDRFIEHGSVTALLEEIGLTKAEVMNRIKLLMPPKTHKGIGS.

Residues histidine 72 and 113–115 (GHS) each bind thiamine diphosphate. Aspartate 144 is a Mg(2+) binding site. Thiamine diphosphate is bound by residues 145–146 (GA), asparagine 173, tyrosine 284, and glutamate 367. Asparagine 173 contributes to the Mg(2+) binding site.

This sequence belongs to the transketolase family. DXPS subfamily. As to quaternary structure, homodimer. It depends on Mg(2+) as a cofactor. Thiamine diphosphate serves as cofactor.

The catalysed reaction is D-glyceraldehyde 3-phosphate + pyruvate + H(+) = 1-deoxy-D-xylulose 5-phosphate + CO2. It functions in the pathway metabolic intermediate biosynthesis; 1-deoxy-D-xylulose 5-phosphate biosynthesis; 1-deoxy-D-xylulose 5-phosphate from D-glyceraldehyde 3-phosphate and pyruvate: step 1/1. Functionally, catalyzes the acyloin condensation reaction between C atoms 2 and 3 of pyruvate and glyceraldehyde 3-phosphate to yield 1-deoxy-D-xylulose-5-phosphate (DXP). The protein is 1-deoxy-D-xylulose-5-phosphate synthase of Bacillus velezensis (strain DSM 23117 / BGSC 10A6 / LMG 26770 / FZB42) (Bacillus amyloliquefaciens subsp. plantarum).